Here is a 325-residue protein sequence, read N- to C-terminus: UPF0285 protein MmarC5_0962 (325 aa).

Belongs to the UPF0285 family.

In Methanococcus maripaludis (strain C5 / ATCC BAA-1333), this protein is UPF0285 protein MmarC5_0962.